Consider the following 131-residue polypeptide: Small ribosomal subunit protein uS11 (131 aa).

Belongs to the universal ribosomal protein uS11 family. As to quaternary structure, part of the 30S ribosomal subunit. Interacts with proteins S7 and S18. Binds to IF-3.

Its function is as follows. Located on the platform of the 30S subunit, it bridges several disparate RNA helices of the 16S rRNA. Forms part of the Shine-Dalgarno cleft in the 70S ribosome. The protein is Small ribosomal subunit protein uS11 of Wigglesworthia glossinidia brevipalpis.